The following is an 827-amino-acid chain: Ribosome biogenesis protein ERB1 (827 aa).

A disordered region spans residues 1-129 (MVHSKKDKSV…DFSDDNDTRP (129 aa)). Residues 7-18 (DKSVMKHSDIKK) are compositionally biased toward basic and acidic residues. Over residues 45–60 (CDSDDDEEFQSAEEEV) the composition is skewed to acidic residues. The segment covering 61–77 (LSSGSESSSKEGSTPGS) has biased composition (low complexity). Acidic residues-rich tracts occupy residues 81 to 99 (GSDE…DEDA) and 108 to 124 (EEGD…FSDD). Residues 291–409 (RFVPSKHEAK…LRKVPGYGES (119 aa)) form a required for interaction with NOP7 region. The tract at residues 409–445 (SVRERFERSLDLYLAPRVRKNKLNIDPESLIPELPSP) is required for interaction with YTM1. WD repeat units follow at residues 461–500 (GHKG…EVYK), 509–549 (NQDD…FEVE), 657–695 (KSKG…LVKK), 698–737 (PGAR…TPYK), 741–780 (YHEK…DMMK), and 796–827 (VNSL…LWTT).

This sequence belongs to the WD repeat BOP1/ERB1 family. Component of the NOP7 complex, composed of ERB1, NOP7 and YTM1. The complex is held together by ERB1, which interacts with NOP7 via its N-terminal domain and with YTM1 via a high-affinity interaction between the seven-bladed beta-propeller domains of the 2 proteins. The NOP7 complex associates with the 66S pre-ribosome.

Its subcellular location is the nucleus. It is found in the nucleolus. The protein resides in the nucleoplasm. In terms of biological role, component of the NOP7 complex, which is required for maturation of the 25S and 5.8S ribosomal RNAs and formation of the 60S ribosome. The sequence is that of Ribosome biogenesis protein ERB1 from Eremothecium gossypii (strain ATCC 10895 / CBS 109.51 / FGSC 9923 / NRRL Y-1056) (Yeast).